A 522-amino-acid chain; its full sequence is 56 kDa type-specific antigen (522 aa).

The first 22 residues, Met1–Ala22, serve as a signal peptide directing secretion. The helical transmembrane segment at Leu67 to Phe87 threads the bilayer. A disordered region spans residues Ala385–Gly417. Positions Asn398–Gly417 are enriched in basic and acidic residues. A helical transmembrane segment spans residues Ile470–Val490.

The protein localises to the cell membrane. Functionally, may be an adherent factor for rickettsial adsorption to the host-cell surface and a determinant of virulence of individual rickettsial strain. It is the major outer membrane protein. The chain is 56 kDa type-specific antigen from Orientia tsutsugamushi (Rickettsia tsutsugamushi).